Reading from the N-terminus, the 454-residue chain is Glycosyl hydrolase family 109 protein (454 aa).

Positions 1 to 29 (MFAMKRREFIAASAAVAASSLLPQTPAWA) form a signal peptide, tat-type signal. NAD(+)-binding positions include 43 to 44 (MR), Asp65, 116 to 119 (WEYH), 136 to 137 (EV), and Asn165. Position 194 (Tyr194) interacts with substrate. 224–228 (SEARW) lines the NAD(+) pocket. Substrate contacts are provided by residues Arg229, 241-244 (YPSH), and Tyr324. Tyr241 lines the NAD(+) pocket.

This sequence belongs to the Gfo/Idh/MocA family. Glycosyl hydrolase 109 subfamily. NAD(+) is required as a cofactor. In terms of processing, predicted to be exported by the Tat system. The position of the signal peptide cleavage has not been experimentally proven.

In terms of biological role, glycosidase. This chain is Glycosyl hydrolase family 109 protein, found in Stenotrophomonas maltophilia (strain K279a).